Consider the following 1138-residue polypeptide: uncharacterized protein (1138 aa).

The first 28 residues, 1-28, serve as a signal peptide directing secretion; that stretch reads MKLFPRSILIILVLSFALNLGLVTKTHA. 7 helical membrane-spanning segments follow: residues 331 to 351, 359 to 379, 392 to 412, 494 to 514, 520 to 540, 554 to 574, and 699 to 719; these read IVTA…LLAG, YINF…INIT, MIQW…SWVM, MLVS…AFMV, CMIS…MFLF, MISF…MFSV, and IKNI…MYNF. Residues 775–784 are compositionally biased toward gly residues; it reads DLKAGQGGGV. Disordered stretches follow at residues 775 to 914, 958 to 977, and 995 to 1071; these read DLKA…KGTG, GGGR…RTNA, and ERDN…KQIR. Over residues 801 to 830 the composition is skewed to low complexity; sequence AASGGTSAPTVTTPTASSSVATSSPKTVSS. A compositionally biased stretch (pro residues) spans 838 to 852; the sequence is TPPPAPSEAVSPPPA. Polar residues predominate over residues 854–869; it reads IRTSISTPAPQSNIET. Basic and acidic residues-rich tracts occupy residues 875–888, 961–977, 995–1032, and 1058–1071; these read IIRD…KEID, RIRD…RTNA, ERDN…RKEN, and LKEH…KQIR.

This sequence belongs to the TrbL/VirB6 family.

The protein localises to the cell membrane. This is an uncharacterized protein from Rickettsia felis (strain ATCC VR-1525 / URRWXCal2) (Rickettsia azadi).